A 127-amino-acid chain; its full sequence is Thioredoxin (127 aa).

The Thioredoxin domain occupies 2 to 115 (SDGVKHINSA…LRAAAEKMGR (114 aa)). Active-site nucleophile residues include Cys-33 and Cys-36. Residues Cys-33 and Cys-36 are joined by a disulfide bond.

The protein belongs to the thioredoxin family.

Its function is as follows. Participates in various redox reactions through the reversible oxidation of its active center dithiol to a disulfide and catalyzes dithiol-disulfide exchange reactions. This Neurospora crassa (strain ATCC 24698 / 74-OR23-1A / CBS 708.71 / DSM 1257 / FGSC 987) protein is Thioredoxin (trx).